Consider the following 267-residue polypeptide: WUSCHEL-related homeobox 8 (267 aa).

The homeobox; WUS-type DNA-binding region spans 88-152 (TARQRWTPTP…NRRARSKRKQ (65 aa)). A disordered region spans residues 148 to 195 (SKRKQAALPNNNAESEAEADEESPTDKKPKSDRPLHQNIAMRDHNSER). Positions 171–195 (PTDKKPKSDRPLHQNIAMRDHNSER) are enriched in basic and acidic residues.

The protein belongs to the WUS homeobox family.

It is found in the nucleus. In terms of biological role, transcription factor which may be involved in developmental processes. In Oryza sativa subsp. japonica (Rice), this protein is WUSCHEL-related homeobox 8 (WOX8).